The following is a 219-amino-acid chain: MYVLFLLSWVLVAGALPAMKKSAIPVLEAIERCRVLGVDIEAYGSKDEILATTKESNNLRECFDILVSADQTALTEVAMLGVLMKRLQTRQALGEPIYELLSKGLPKGAGAKAVTNGNMSGVGQALLRRHKRQVMPLGEVGEDPGKRARKRRLGLPIGEPGEDVGKRMRQRQQGRARQNYNTWLRKYYAWYQRAQRYYARKRGARPAAAAKPAAKKPAV.

Residues 1–15 form the signal peptide; the sequence is MYVLFLLSWVLVAGA. The N-linked (GlcNAc...) asparagine glycan is linked to Asn-118. Residues 138–174 form a disordered region; the sequence is GEVGEDPGKRARKRRLGLPIGEPGEDVGKRMRQRQQG.

As to expression, component of the acid-insoluble and acid-soluble organic matrix of calcified layers of the shell (at protein level).

It is found in the secreted. This is an uncharacterized protein from Lottia gigantea (Giant owl limpet).